The chain runs to 368 residues: H-2 class I histocompatibility antigen, D-P alpha chain (368 aa).

An N-terminal signal peptide occupies residues 1–21; sequence MAPRTLLLLLAAALAPTQTRA. Residues 22 to 111 are alpha-1; sequence GPHSLRYFVT…LLGYYNQSKG (90 aa). Topologically, residues 22–303 are extracellular; it reads GPHSLRYFVT…RWEPPPSTDS (282 aa). Asn-107 is a glycosylation site (N-linked (GlcNAc...) asparagine). Residues 112–203 are alpha-2; sequence GSHTIQGMRG…ELGNATLLCT (92 aa). An intrachain disulfide couples Cys-122 to Cys-185. N-linked (GlcNAc...) asparagine glycosylation is found at Asn-197 and Asn-277. The segment at 204-295 is alpha-3; that stretch reads DPPKAHVTHH…GLPEPLTLRW (92 aa). The Ig-like C1-type domain maps to 206–294; that stretch reads PKAHVTHHPR…EGLPEPLTLR (89 aa). Cys-224 and Cys-280 are joined by a disulfide. The connecting peptide stretch occupies residues 296-303; it reads EPPPSTDS. The helical transmembrane segment at 304-330 threads the bilayer; sequence YMVIVAVLVVLGAVFIIGAVVAFVMMM. Over 331-368 the chain is Cytoplasmic; that stretch reads RRNTGGKGGDYTLAPGSQSSEMSLRDCKVMVHDSHSLA. Ser-350 and Ser-353 each carry phosphoserine.

This sequence belongs to the MHC class I family. In terms of assembly, heterodimer of an alpha chain and a beta chain (beta-2-microglobulin).

The protein localises to the membrane. Its function is as follows. Involved in the presentation of foreign antigens to the immune system. The protein is H-2 class I histocompatibility antigen, D-P alpha chain (H2-D1) of Mus musculus (Mouse).